We begin with the raw amino-acid sequence, 384 residues long: Autophagy-related protein 30 (384 aa).

A disordered region spans residues methionine 1–threonine 63. Residues glutamate 13 to asparagine 27 are compositionally biased toward low complexity. The span at arginine 45–threonine 63 shows a compositional bias: polar residues. The residue at position 112 (serine 112) is a Phosphoserine. Positions valine 266–glutamine 291 are disordered. A compositionally biased stretch (polar residues) spans tyrosine 278–glutamine 291.

In terms of assembly, interacts with ATG11, ATG17, ATG37, PEX3 and PEX14. Phosphorylation at Ser-112 is required for micro- and macropexophagy.

It localises to the vacuole lumen. The protein localises to the preautophagosomal structure. The protein resides in the peroxisome membrane. In terms of biological role, acts as the peroxisome receptor for pexophagy. Required for both micropexophagy and macropexophagy, but not for the cytoplasm to vacuole transport (Cvt) or autophagy pathways. Required for functional micropexophagic apparatus (MIPA) and relocation of ATG11 to the peroxisome-sequestering arms of the vacuole. In Komagataella phaffii (strain GS115 / ATCC 20864) (Yeast), this protein is Autophagy-related protein 30 (ATG30).